Reading from the N-terminus, the 542-residue chain is Protein XP55 (542 aa).

The N-terminal stretch at Met-1–Ala-33 is a signal peptide. Residue Cys-34 is the site of N-palmitoyl cysteine attachment. Cys-34 carries S-diacylglycerol cysteine lipidation. A disordered region spans residues Leu-519–Lys-542.

This sequence belongs to the bacterial solute-binding protein 5 family.

It localises to the cell membrane. Required for transport of an unidentified substrate. The polypeptide is Protein XP55 (xp55) (Streptomyces lividans).